Reading from the N-terminus, the 594-residue chain is Glutamate decarboxylase 1 (594 aa).

Over residues 1–13 (MASSTPSSSATSS) the composition is skewed to low complexity. A disordered region spans residues 1-23 (MASSTPSSSATSSNAGADPNTTN). At S78 the chain carries Phosphoserine. 190 to 192 (QLS) contacts 4-aminobutanoate. The residue at position 405 (K405) is an N6-(pyridoxal phosphate)lysine. R567 provides a ligand contact to 4-aminobutanoate.

The protein belongs to the group II decarboxylase family. In terms of assembly, homodimer. Pyridoxal 5'-phosphate is required as a cofactor.

The enzyme catalyses L-glutamate + H(+) = 4-aminobutanoate + CO2. Catalyzes the synthesis of the inhibitory neurotransmitter gamma-aminobutyric acid (GABA) with pyridoxal 5'-phosphate as cofactor. In Pongo abelii (Sumatran orangutan), this protein is Glutamate decarboxylase 1 (GAD1).